The chain runs to 99 residues: C-C motif chemokine 8 (99 aa).

Positions 1–23 are cleaved as a signal peptide; that stretch reads MKVSAGILCLLLVAATFGTQVLA. Pyrrolidone carboxylic acid is present on Gln-24. Intrachain disulfides connect Cys-34/Cys-59 and Cys-35/Cys-75.

The protein belongs to the intercrine beta (chemokine CC) family. In terms of assembly, monomer or homodimer; in equilibrium.

The protein resides in the secreted. Functionally, chemotactic factor that attracts monocytes. This protein can bind heparin. This is C-C motif chemokine 8 (CCL8) from Bos taurus (Bovine).